The chain runs to 196 residues: Probable malonic semialdehyde reductase RutE (196 aa).

The protein belongs to the nitroreductase family. HadB/RutE subfamily. The cofactor is FMN.

It carries out the reaction 3-hydroxypropanoate + NADP(+) = 3-oxopropanoate + NADPH + H(+). In terms of biological role, may reduce toxic product malonic semialdehyde to 3-hydroxypropionic acid, which is excreted. This chain is Probable malonic semialdehyde reductase RutE, found in Escherichia coli O139:H28 (strain E24377A / ETEC).